Here is a 658-residue protein sequence, read N- to C-terminus: Putative arrestin-related trafficking adapter C2D10.04 (658 aa).

2 disordered regions span residues 21–107 (LHHQ…LTWS) and 638–658 (REEA…EIPR). A compositionally biased stretch (low complexity) spans 39-81 (NRSSNSGLNRRNSVFGLPSSGLSSRLSKPSLSSINNSNNSSSN). Polar residues predominate over residues 96–107 (RNMSNKPPLTWS). S653 carries the phosphoserine modification.

This sequence belongs to the ALY1 family.

Its subcellular location is the cytoplasm. May regulate endocytosis in response to extracellular stimuli. This is Putative arrestin-related trafficking adapter C2D10.04 from Schizosaccharomyces pombe (strain 972 / ATCC 24843) (Fission yeast).